We begin with the raw amino-acid sequence, 588 residues long: Sperm-associated microtubule inner protein 4 (588 aa).

Thr219 carries the post-translational modification Phosphothreonine. 3 positions are modified to phosphoserine: Ser406, Ser421, and Ser427. Tyr441 carries the post-translational modification Phosphotyrosine. Residues Ser457, Ser484, and Ser516 each carry the phosphoserine modification.

In terms of tissue distribution, predominantly expressed in the testes.

The protein localises to the cytoplasm. It localises to the cytoskeleton. It is found in the microtubule organizing center. Its subcellular location is the centrosome. The protein resides in the flagellum axoneme. Its function is as follows. Microtubule inner protein (MIP) part of the dynein-decorated doublet microtubules (DMTs) in flagellum axoneme. May serve to reinforce and thus stabilize the microtubule structure in the sperm flagella. This chain is Sperm-associated microtubule inner protein 4 (Spmip4), found in Mus musculus (Mouse).